Here is a 165-residue protein sequence, read N- to C-terminus: 2-C-methyl-D-erythritol 2,4-cyclodiphosphate synthase (165 aa).

A divalent metal cation-binding residues include Asp-12 and His-14. 4-CDP-2-C-methyl-D-erythritol 2-phosphate is bound by residues 12–14 (DIH) and 38–39 (HS). His-46 is an a divalent metal cation binding site. Residues 60–62 (DIG), 136–139 (TTNE), and Arg-146 each bind 4-CDP-2-C-methyl-D-erythritol 2-phosphate.

This sequence belongs to the IspF family. Homotrimer. Requires a divalent metal cation as cofactor.

It catalyses the reaction 4-CDP-2-C-methyl-D-erythritol 2-phosphate = 2-C-methyl-D-erythritol 2,4-cyclic diphosphate + CMP. It functions in the pathway isoprenoid biosynthesis; isopentenyl diphosphate biosynthesis via DXP pathway; isopentenyl diphosphate from 1-deoxy-D-xylulose 5-phosphate: step 4/6. Involved in the biosynthesis of isopentenyl diphosphate (IPP) and dimethylallyl diphosphate (DMAPP), two major building blocks of isoprenoid compounds. Catalyzes the conversion of 4-diphosphocytidyl-2-C-methyl-D-erythritol 2-phosphate (CDP-ME2P) to 2-C-methyl-D-erythritol 2,4-cyclodiphosphate (ME-CPP) with a corresponding release of cytidine 5-monophosphate (CMP). The sequence is that of 2-C-methyl-D-erythritol 2,4-cyclodiphosphate synthase from Nostoc sp. (strain PCC 7120 / SAG 25.82 / UTEX 2576).